The chain runs to 115 residues: Nucleoid-associated protein Pro_0020 (115 aa).

Belongs to the YbaB/EbfC family. In terms of assembly, homodimer.

It localises to the cytoplasm. The protein localises to the nucleoid. In terms of biological role, binds to DNA and alters its conformation. May be involved in regulation of gene expression, nucleoid organization and DNA protection. In Prochlorococcus marinus (strain SARG / CCMP1375 / SS120), this protein is Nucleoid-associated protein Pro_0020.